The primary structure comprises 284 residues: uncharacterized protein (284 aa).

The protein belongs to the AtsA family.

This is an uncharacterized protein from Mycobacterium leprae (strain TN).